The sequence spans 484 residues: ATP synthase subunit beta (484 aa).

ATP is bound at residue 168-175; the sequence is GGAGVGKT.

The protein belongs to the ATPase alpha/beta chains family. As to quaternary structure, F-type ATPases have 2 components, CF(1) - the catalytic core - and CF(0) - the membrane proton channel. CF(1) has five subunits: alpha(3), beta(3), gamma(1), delta(1), epsilon(1). CF(0) has three main subunits: a(1), b(2) and c(9-12). The alpha and beta chains form an alternating ring which encloses part of the gamma chain. CF(1) is attached to CF(0) by a central stalk formed by the gamma and epsilon chains, while a peripheral stalk is formed by the delta and b chains.

The protein localises to the cell membrane. It catalyses the reaction ATP + H2O + 4 H(+)(in) = ADP + phosphate + 5 H(+)(out). Its function is as follows. Produces ATP from ADP in the presence of a proton gradient across the membrane. The catalytic sites are hosted primarily by the beta subunits. In Pseudarthrobacter chlorophenolicus (strain ATCC 700700 / DSM 12829 / CIP 107037 / JCM 12360 / KCTC 9906 / NCIMB 13794 / A6) (Arthrobacter chlorophenolicus), this protein is ATP synthase subunit beta.